The following is a 564-amino-acid chain: Septin-9 (564 aa).

M1 carries the N-acetylmethionine modification. Position 12 is a phosphoserine (S12). Residues T24 and T31 each carry the phosphothreonine modification. 2 disordered regions span residues 38-165 (VASS…PVTD) and 178-224 (PAEA…DSEV). Residue K44 is modified to N6-acetyllysine. Residues S64, S67, and S71 each carry the phosphoserine modification. Polar residues predominate over residues 95–109 (DISSKQVESTASTPG). Basic and acidic residues predominate over residues 116–134 (KRAEVLGHKTPEPVPRRTE). A Phosphothreonine modification is found at T125. Over residues 190 to 203 (TLENSEAPMSQLQS) the composition is skewed to polar residues. Residue Y258 is modified to Phosphotyrosine. Residues 275 to 546 (QGFEFNIMVV…EAYRVKRLNE (272 aa)) enclose the Septin-type G domain. The G1 motif stretch occupies residues 285-292 (GQSGLGKS). A GTP-binding site is contributed by 285-292 (GQSGLGKS). 2 positions are modified to phosphoserine: S307 and S312. Residues T319, G345, 425–433 (KADTLTLEE), G480, and R495 each bind GTP. The G3 motif stretch occupies residues 342–345 (DTPG). A G4 motif region spans residues 424–427 (AKAD).

This sequence belongs to the TRAFAC class TrmE-Era-EngA-EngB-Septin-like GTPase superfamily. Septin GTPase family. In terms of assembly, septins polymerize into heterooligomeric protein complexes that form filaments, and associate with cellular membranes, actin filaments, and microtubules. GTPase activity is required for filament formation. Interacts with SEPTIN2, SEPTIN6, SEPTIN7, SEPTIN11 and SEPTIN14. Interacts with RTKN and ARHGEF18. As to expression, expressed in the brain, mainly in the perikarya and processes of astrocytes in the cerebellum, dentate gyrus and corpus callosum (at protein level). In the sciatic nerve, highly expressed in Schwann cells (at protein level). Isoforms are differentially expressed in testes, kidney, liver, heart, spleen and brain. Undetectable in skeletal muscle.

It localises to the cytoplasm. The protein resides in the cytoskeleton. Filament-forming cytoskeletal GTPase. May play a role in cytokinesis (Potential). The polypeptide is Septin-9 (Rattus norvegicus (Rat)).